Consider the following 523-residue polypeptide: Ribonuclease Y (523 aa).

Residues 7–24 (LSSLASALLAGGGTYLVY) form a helical membrane-spanning segment. Residues 213 to 279 (LINVVNLPND…TRTIEALVED (67 aa)) enclose the KH domain. One can recognise an HD domain in the interval 339 to 432 (ALGHSLEVAN…VCAADALSAA (94 aa)).

This sequence belongs to the RNase Y family.

It localises to the cell membrane. Endoribonuclease that initiates mRNA decay. This Wolinella succinogenes (strain ATCC 29543 / DSM 1740 / CCUG 13145 / JCM 31913 / LMG 7466 / NCTC 11488 / FDC 602W) (Vibrio succinogenes) protein is Ribonuclease Y.